Consider the following 265-residue polypeptide: tRNA pseudouridine synthase A (265 aa).

D53 acts as the Nucleophile in catalysis. Y111 contributes to the substrate binding site.

It belongs to the tRNA pseudouridine synthase TruA family. In terms of assembly, homodimer.

It catalyses the reaction uridine(38/39/40) in tRNA = pseudouridine(38/39/40) in tRNA. Formation of pseudouridine at positions 38, 39 and 40 in the anticodon stem and loop of transfer RNAs. This chain is tRNA pseudouridine synthase A, found in Acinetobacter baumannii (strain SDF).